Reading from the N-terminus, the 272-residue chain is Tryptophan synthase alpha chain (272 aa).

Residues Glu49 and Asp60 each act as proton acceptor in the active site.

The protein belongs to the TrpA family. Tetramer of two alpha and two beta chains.

It catalyses the reaction (1S,2R)-1-C-(indol-3-yl)glycerol 3-phosphate + L-serine = D-glyceraldehyde 3-phosphate + L-tryptophan + H2O. Its pathway is amino-acid biosynthesis; L-tryptophan biosynthesis; L-tryptophan from chorismate: step 5/5. Functionally, the alpha subunit is responsible for the aldol cleavage of indoleglycerol phosphate to indole and glyceraldehyde 3-phosphate. This Methylibium petroleiphilum (strain ATCC BAA-1232 / LMG 22953 / PM1) protein is Tryptophan synthase alpha chain.